The following is a 1521-amino-acid chain: Protein OPAQUE1 (1521 aa).

The region spanning 4–53 (RKGLKVWVEEKGEGWVEAEVVEAKERAVVVFSSQRKKITVSPEKLLPRDT) is the Myosin N-terminal SH3-like domain. One can recognise a Myosin motor domain in the interval 60–731 (GHVDDMTKLT…QIAILDMRRA (672 aa)). Residues 155–162 (GESGAGKT) and 208–216 (NDNSSRFGK) contribute to the ATP site. Actin-binding stretches follow at residues 493–527 (LIEK…FRNF), 529–552 (SHLR…AGKV), 587–612 (FTSL…KLQL), and 612–634 (LQAL…KPNS). IQ domains are found at residues 733–755 (ILDN…KEFV), 756–778 (KTRE…KMFA), 781–803 (RETA…RAHL), 804–826 (QACL…RYFS), 829–851 (REHK…ILFQ), and 852–874 (NYRQ…KELR). Coiled-coil stretches lie at residues 870–910 (RKEL…ERRL) and 974–1050 (SAEA…LRQK). The Dilute domain occupies 1162 to 1459 (DHVIEAINDV…VAAMREMVNK (298 aa)).

Belongs to the TRAFAC class myosin-kinesin ATPase superfamily. Myosin family. Plant myosin class XI subfamily. In terms of assembly, interacts (via C-terminus) with HIP (via C-terminus), but not with zeins, FL1 or intrinsic proteins of protein bodies. High expression in kernels and stems, intermediate in ears and leaves, and low in roots, silks and tassels.

The protein resides in the cytoplasm. Its function is as follows. Myosin XI motor protein required for endoplasmic reticulum motility and protein body formation. May function by binding with its tail domain to receptor proteins on membranes and exerting force with its N-terminal motor domain against actin filaments, thereby transporting its cargo along polarized actin cables. The polypeptide is Protein OPAQUE1 (Zea mays (Maize)).